The primary structure comprises 206 residues: Oligoribonuclease (206 aa).

Residues 20–183 enclose the Exonuclease domain; it reads LVWLDMEMTG…ADIHESIDEL (164 aa). Residue Tyr-141 is part of the active site.

Belongs to the oligoribonuclease family.

It localises to the cytoplasm. Functionally, 3'-to-5' exoribonuclease specific for small oligoribonucleotides. The protein is Oligoribonuclease of Burkholderia lata (strain ATCC 17760 / DSM 23089 / LMG 22485 / NCIMB 9086 / R18194 / 383).